The sequence spans 268 residues: Small ribosomal subunit protein uS2 (268 aa).

The tract at residues serine 233–alanine 268 is disordered.

It belongs to the universal ribosomal protein uS2 family.

The polypeptide is Small ribosomal subunit protein uS2 (Stenotrophomonas maltophilia (strain K279a)).